The sequence spans 222 residues: Peptidyl-prolyl cis-trans isomerase FKBP7 (222 aa).

The first 23 residues, 1–23, serve as a signal peptide directing secretion; that stretch reads MPKTMHFLFRFIVFFYLWGLFTA. Asn45 carries N-linked (GlcNAc...) asparagine glycosylation. In terms of domain architecture, PPIase FKBP-type spans 53 to 145; sequence GDLLNAHYDG…IFEIELYAVT (93 aa). 2 consecutive EF-hand domains span residues 145 to 180 and 189 to 222; these read TKGP…EFEK and YQDA…HDEL. Residues Asp158, Asp160, Asp162, Gln164, Glu169, Asp202, Asp204, Asp206, and Glu213 each contribute to the Ca(2+) site. The disordered stretch occupies residues 200 to 222; the sequence is KNDHDGDGFISPKEYNVYQHDEL. A Retention in the endoplasmic reticulum motif is present at residues 219–222; the sequence is HDEL.

In terms of processing, glycosylated.

The protein resides in the endoplasmic reticulum lumen. The catalysed reaction is [protein]-peptidylproline (omega=180) = [protein]-peptidylproline (omega=0). Its function is as follows. PPIases accelerate the folding of proteins during protein synthesis. The polypeptide is Peptidyl-prolyl cis-trans isomerase FKBP7 (FKBP7) (Homo sapiens (Human)).